A 226-amino-acid chain; its full sequence is 7-cyano-7-deazaguanine synthase (226 aa).

ATP is bound at residue 9-19 (LSGGLDSATVL). Zn(2+) is bound by residues C189, C199, C202, and C205.

This sequence belongs to the QueC family. Zn(2+) is required as a cofactor.

It carries out the reaction 7-carboxy-7-deazaguanine + NH4(+) + ATP = 7-cyano-7-deazaguanine + ADP + phosphate + H2O + H(+). It functions in the pathway purine metabolism; 7-cyano-7-deazaguanine biosynthesis. Catalyzes the ATP-dependent conversion of 7-carboxy-7-deazaguanine (CDG) to 7-cyano-7-deazaguanine (preQ(0)). This Cupriavidus pinatubonensis (strain JMP 134 / LMG 1197) (Cupriavidus necator (strain JMP 134)) protein is 7-cyano-7-deazaguanine synthase.